Reading from the N-terminus, the 236-residue chain is 5'-methylthioadenosine/S-adenosylhomocysteine nucleosidase (236 aa).

The active-site Proton acceptor is the E12. Residues G78, I153, and M174–E175 each bind substrate. D198 (proton donor) is an active-site residue.

The protein belongs to the PNP/UDP phosphorylase family. MtnN subfamily.

It carries out the reaction S-adenosyl-L-homocysteine + H2O = S-(5-deoxy-D-ribos-5-yl)-L-homocysteine + adenine. It catalyses the reaction S-methyl-5'-thioadenosine + H2O = 5-(methylsulfanyl)-D-ribose + adenine. The enzyme catalyses 5'-deoxyadenosine + H2O = 5-deoxy-D-ribose + adenine. The protein operates within amino-acid biosynthesis; L-methionine biosynthesis via salvage pathway; S-methyl-5-thio-alpha-D-ribose 1-phosphate from S-methyl-5'-thioadenosine (hydrolase route): step 1/2. Functionally, catalyzes the irreversible cleavage of the glycosidic bond in both 5'-methylthioadenosine (MTA) and S-adenosylhomocysteine (SAH/AdoHcy) to adenine and the corresponding thioribose, 5'-methylthioribose and S-ribosylhomocysteine, respectively. Also cleaves 5'-deoxyadenosine, a toxic by-product of radical S-adenosylmethionine (SAM) enzymes, into 5-deoxyribose and adenine. This Shewanella baltica (strain OS155 / ATCC BAA-1091) protein is 5'-methylthioadenosine/S-adenosylhomocysteine nucleosidase.